The primary structure comprises 95 residues: UPF0235 protein A2cp1_1215 (95 aa).

Belongs to the UPF0235 family.

The protein is UPF0235 protein A2cp1_1215 of Anaeromyxobacter dehalogenans (strain 2CP-1 / ATCC BAA-258).